A 1327-amino-acid chain; its full sequence is Kinectin (1327 aa).

Residues 1-8 are Cytoplasmic-facing; sequence MELYESTY. Residues 9–29 form a helical; Signal-anchor for type II membrane protein membrane-spanning segment; sequence FIVLIPSVVITVIFLFFWLFM. Residues 30 to 1327 are Lumenal-facing; it reads KETLYDEVLA…EVNQQLTKET (1298 aa). Disordered stretches follow at residues 49–181 and 197–216; these read STKT…EQDK and LSHQ…GLSK. Asn-69 is a glycosylation site (N-linked (GlcNAc...) asparagine). 2 stretches are compositionally biased toward basic and acidic residues: residues 73 to 86 and 111 to 135; these read RESD…DFKL and VRER…ESDA. 2 positions are modified to phosphoserine: Ser-75 and Ser-77. Positions 163–173 are enriched in basic residues; it reads LKKKAGQKKSK. A coiled-coil region spans residues 329–1327; it reads ELSGLLHQLQ…EVNQQLTKET (999 aa). N-linked (GlcNAc...) asparagine glycosylation is present at Asn-1031. Ser-1060 bears the Phosphoserine mark. N-linked (GlcNAc...) asparagine glycosylation is present at Asn-1066. Ser-1290 is subject to Phosphoserine.

It belongs to the kinectin family. In terms of tissue distribution, expressed in all tissues examined including 12-day embryo, adult heart, brain, ovary, kidney, lung, small intestine, spleen, thymus and pancreas.

It localises to the endoplasmic reticulum membrane. Functionally, receptor for kinesin thus involved in kinesin-driven vesicle motility. Accumulates in integrin-based adhesion complexes (IAC) upon integrin aggregation by fibronectin. The protein is Kinectin of Mus musculus (Mouse).